The chain runs to 132 residues: Myelin P2 protein (132 aa).

Ser-2 bears the N-acetylserine mark. (9Z)-octadecenoate is bound by residues Arg-107 and 127–129; that span reads RIY. Hexadecanoate-binding positions include Arg-107 and 127-129; that span reads RIY.

It belongs to the calycin superfamily. Fatty-acid binding protein (FABP) family. As to quaternary structure, monomer.

It is found in the cytoplasm. Its function is as follows. May play a role in lipid transport protein in Schwann cells. May bind cholesterol. In Oryctolagus cuniculus (Rabbit), this protein is Myelin P2 protein (PMP2).